Here is a 160-residue protein sequence, read N- to C-terminus: Cytochrome b6-f complex subunit 4 (160 aa).

3 helical membrane passes run 36–56 (LLYM…GLAV), 95–115 (LLGV…PFIE), and 131–151 (TVFL…TLPI).

The protein belongs to the cytochrome b family. PetD subfamily. In terms of assembly, the 4 large subunits of the cytochrome b6-f complex are cytochrome b6, subunit IV (17 kDa polypeptide, petD), cytochrome f and the Rieske protein, while the 4 small subunits are petG, petL, petM and petN. The complex functions as a dimer.

Its subcellular location is the plastid. The protein localises to the chloroplast thylakoid membrane. In terms of biological role, component of the cytochrome b6-f complex, which mediates electron transfer between photosystem II (PSII) and photosystem I (PSI), cyclic electron flow around PSI, and state transitions. This is Cytochrome b6-f complex subunit 4 from Nephroselmis olivacea (Green alga).